A 410-amino-acid polypeptide reads, in one-letter code: Schlafen-like protein 1 (410 aa).

Disordered stretches follow at residues Met1–Gln20 and Leu141–Arg199. A compositionally biased stretch (polar residues) spans Ala8 to Gln20. Residues Ser154–Pro173 show a composition bias toward pro residues. An ATP-binding site is contributed by Gly264–Val271. Positions Gln370 to Gln401 form a coiled coil.

The protein belongs to the Schlafen family. Subgroup I subfamily.

This is Schlafen-like protein 1 (Slfnl1) from Mus musculus (Mouse).